Consider the following 145-residue polypeptide: Ponticulin-like protein B (145 aa).

Residues 1 to 22 form the signal peptide; it reads MLFIKSLLLLLSLIFAVSNATG. N-linked (GlcNAc...) asparagine glycosylation occurs at Asn34. Residues 107–126 form a disordered region; that stretch reads DTTSSSTSPSSTSPSSTSPA. Residues 108-126 are compositionally biased toward low complexity; sequence TTSSSTSPSSTSPSSTSPA. The GPI-like-anchor amidated serine moiety is linked to residue Ser117. The propeptide at 118–145 is removed in mature form; it reads TSPSSTSPASTLIGSIAFVTLAALFALI.

It belongs to the ponticulin family. In terms of processing, the GPI-like-anchor contains a phosphoceramide group, rather than a phosphatidyl group.

The protein localises to the cell membrane. In terms of biological role, binds F-actin and nucleates actin assembly. In Dictyostelium discoideum (Social amoeba), this protein is Ponticulin-like protein B (ponB).